The following is a 239-amino-acid chain: RNA-binding protein 38 (239 aa).

Residues 34–111 (TKIFVGGLPY…RKANVNLAYL (78 aa)) enclose the RRM domain.

This sequence belongs to the RBM38 family.

It localises to the cytoplasm. The protein localises to the cytosol. It is found in the nucleus. RNA-binding protein that specifically bind the 3'-UTR of CDKN1A transcripts, leading to maintain the stability of CDKN1A transcripts, thereby acting as a mediator of the p53/TP53 family to regulate CDKN1A. CDKN1A is a cyclin-dependent kinase inhibitor transcriptionally regulated by the p53/TP53 family to induce cell cycle arrest. Isoform 1, but not isoform 2, has the ability to induce cell cycle arrest in G1 and maintain the stability of CDKN1A transcripts induced by p53/TP53. Also acts as a mRNA splicing factor. Specifically regulates the expression of FGFR2-IIIb, an epithelial cell-specific isoform of FGFR2. Plays a role in myogenic differentiation. Functionally, (Microbial infection) Essential factor for the splicing of the pre-mRNAs of human parvovirus B19 (B19V) and for the expression of B19V 11-kDa protein, which enhances viral replication. The sequence is that of RNA-binding protein 38 (RBM38) from Homo sapiens (Human).